The sequence spans 207 residues: Ribosomal RNA large subunit methyltransferase E (207 aa).

Residues Gly60, Trp62, Asp80, Asp96, and Asp121 each contribute to the S-adenosyl-L-methionine site. Lys161 acts as the Proton acceptor in catalysis.

The protein belongs to the class I-like SAM-binding methyltransferase superfamily. RNA methyltransferase RlmE family.

It localises to the cytoplasm. It catalyses the reaction uridine(2552) in 23S rRNA + S-adenosyl-L-methionine = 2'-O-methyluridine(2552) in 23S rRNA + S-adenosyl-L-homocysteine + H(+). Specifically methylates the uridine in position 2552 of 23S rRNA at the 2'-O position of the ribose in the fully assembled 50S ribosomal subunit. This Pseudomonas aeruginosa (strain UCBPP-PA14) protein is Ribosomal RNA large subunit methyltransferase E.